The sequence spans 504 residues: Protein anon-37Cs (504 aa).

As to expression, low levels seen in adult heads, thorax, abdomen and ovaries, high levels in testes.

The protein localises to the cytoplasm. Its function is as follows. Has a non-vital function. This Drosophila melanogaster (Fruit fly) protein is Protein anon-37Cs (anon-37Cs).